A 268-amino-acid polypeptide reads, in one-letter code: Universal stress protein MT3220 (268 aa).

ATP-binding positions include glycine 13, glycine 107–histidine 113, arginine 117, and serine 120–valine 121.

Belongs to the universal stress protein A family.

The protein is Universal stress protein MT3220 of Mycobacterium tuberculosis (strain CDC 1551 / Oshkosh).